Here is a 178-residue protein sequence, read N- to C-terminus: Large ribosomal subunit protein bL25 (178 aa).

Belongs to the bacterial ribosomal protein bL25 family. CTC subfamily. As to quaternary structure, part of the 50S ribosomal subunit; part of the 5S rRNA/L5/L18/L25 subcomplex. Contacts the 5S rRNA. Binds to the 5S rRNA independently of L5 and L18.

This is one of the proteins that binds to the 5S RNA in the ribosome where it forms part of the central protuberance. The protein is Large ribosomal subunit protein bL25 of Campylobacter jejuni subsp. jejuni serotype O:23/36 (strain 81-176).